Here is a 394-residue protein sequence, read N- to C-terminus: Nuclear hormone receptor family member nhr-18 (394 aa).

The nuclear receptor DNA-binding region spans 8-83 (SGSCEVCGDK…VGMDTRRFQT (76 aa)). 2 consecutive NR C4-type zinc fingers follow at residues 11–31 (CEVC…CRAC) and 48–71 (CPNG…LKKC). The region spanning 134 to 394 (MLQKPTNHVL…FSHPEMFEAT (261 aa)) is the NR LBD domain.

It belongs to the nuclear hormone receptor family.

It is found in the nucleus. Orphan nuclear receptor. The chain is Nuclear hormone receptor family member nhr-18 (nhr-18) from Caenorhabditis elegans.